A 128-amino-acid polypeptide reads, in one-letter code: MQRNMLKSKIHRAVVTHCELHYEGSCAIDENLLEAANIVENERIDIWNINNGERFSTYAIKGERGSGMISLNGSAARRAQLGDLVIIAAFANVDEEELKAGWKPDLVFVDDKNAIKGSRDHVPTQSWT.

Ser25 acts as the Schiff-base intermediate with substrate; via pyruvic acid in catalysis. Ser25 carries the post-translational modification Pyruvic acid (Ser). Thr57 is a binding site for substrate. Tyr58 functions as the Proton donor in the catalytic mechanism. 73-75 (GSA) is a binding site for substrate.

The protein belongs to the PanD family. Heterooctamer of four alpha and four beta subunits. It depends on pyruvate as a cofactor. Post-translationally, is synthesized initially as an inactive proenzyme, which is activated by self-cleavage at a specific serine bond to produce a beta-subunit with a hydroxyl group at its C-terminus and an alpha-subunit with a pyruvoyl group at its N-terminus.

It localises to the cytoplasm. It carries out the reaction L-aspartate + H(+) = beta-alanine + CO2. It participates in cofactor biosynthesis; (R)-pantothenate biosynthesis; beta-alanine from L-aspartate: step 1/1. Its function is as follows. Catalyzes the pyruvoyl-dependent decarboxylation of aspartate to produce beta-alanine. The protein is Aspartate 1-decarboxylase of Paraburkholderia phymatum (strain DSM 17167 / CIP 108236 / LMG 21445 / STM815) (Burkholderia phymatum).